A 138-amino-acid chain; its full sequence is Putative pre-16S rRNA nuclease (138 aa).

It belongs to the YqgF nuclease family.

The protein localises to the cytoplasm. Functionally, could be a nuclease involved in processing of the 5'-end of pre-16S rRNA. This Glaesserella parasuis serovar 5 (strain SH0165) (Haemophilus parasuis) protein is Putative pre-16S rRNA nuclease.